A 505-amino-acid polypeptide reads, in one-letter code: Cholesteryl ester transfer protein (505 aa).

A signal peptide spans 1–24; the sequence is MLWAGGMRLGMARILLMLVHAAAA. Residues Asn68 and Asn114 are each glycosylated (N-linked (GlcNAc...) asparagine). The cysteines at positions 169 and 210 are disulfide-linked. 3 N-linked (GlcNAc...) asparagine glycosylation sites follow: Asn266, Asn344, and Asn422.

This sequence belongs to the BPI/LBP/Plunc superfamily. BPI/LBP family. As to expression, highly expressed in liver brain, heart, and spleen. Secreted in plasma.

The protein resides in the secreted. It catalyses the reaction cholesteryl (9Z-octadecenoate)(in) = cholesteryl (9Z-octadecenoate)(out). It carries out the reaction 1,2,3-tri-(9Z-octadecenoyl)-glycerol(in) = 1,2,3-tri-(9Z-octadecenoyl)-glycerol(out). The enzyme catalyses cholesteryl (9Z,12Z)-octadecadienoate(in) = cholesteryl (9Z,12Z)-octadecadienoate(out). In terms of biological role, involved in the transfer of neutral lipids, including cholesteryl ester and triglyceride, among lipoprotein particles. Allows the net movement of cholesteryl ester from high density lipoproteins/HDL to triglyceride-rich very low density lipoproteins/VLDL, and the equimolar transport of triglyceride from VLDL to HDL. Regulates the reverse cholesterol transport, by which excess cholesterol is removed from peripheral tissues and returned to the liver for elimination. The protein is Cholesteryl ester transfer protein of Gallus gallus (Chicken).